The sequence spans 303 residues: MNTLEQTIGNTPLVKLQRLGPDNGSEIWVKLEGNNPAGSVKDRAALSMIVEAEKRGEIKPGDVLIEATSGNTGIALAMIAALKGYRMKLLMPDNMSQERRAAMRAYGAELILVTKEQGMEGARDLALAMSERGEGKLLDQFNNPDNPYAHYTTTGPEIWRQTSGRITHFVSSMGTTGTITGVSRFLREQEKPVTIVGLQPEEGSSIPGIRRWPAEYMPGIFNASLVDEVLDIHQNDAENTMRELAVREGIFCGVSSGGAVAGALRVARATPGAIVVAIICDRGDRYLSTGVFGEEHFSQGAGI.

K41 bears the N6-(pyridoxal phosphate)lysine mark. Pyridoxal 5'-phosphate is bound by residues N71, 174 to 178 (GTTGT), and S255.

Belongs to the cysteine synthase/cystathionine beta-synthase family. Requires pyridoxal 5'-phosphate as cofactor.

The catalysed reaction is O-acetyl-L-serine + hydrogen sulfide = L-cysteine + acetate. It functions in the pathway amino-acid biosynthesis; L-cysteine biosynthesis; L-cysteine from L-serine: step 2/2. Its function is as follows. Two cysteine synthase enzymes are found. Both catalyze the same reaction. Cysteine synthase B can also use thiosulfate in place of sulfide to give cysteine thiosulfonate as a product. This is Cysteine synthase B (cysM) from Salmonella typhimurium (strain LT2 / SGSC1412 / ATCC 700720).